Here is a 574-residue protein sequence, read N- to C-terminus: Frizzled and smoothened-like protein G (574 aa).

The first 19 residues, 1 to 19, serve as a signal peptide directing secretion; it reads MKSIIFITFFIFFLKKLNG. Over 20–246 the chain is Extracellular; that stretch reads LPNGYGVGLV…EKWNQIENLS (227 aa). The FZ domain occupies 30–181; it reads DPNGQCMNYI…GLYEVPCFNP (152 aa). Disulfide bonds link C35-C109, C48-C102, C91-C138, and C127-C178. Residues N119, N161, N187, N206, N233, and N244 are each glycosylated (N-linked (GlcNAc...) asparagine). The chain crosses the membrane as a helical span at residues 247 to 267; sequence KVLSTISFVCSIYNILSFGIL. Topologically, residues 268 to 273 are cytoplasmic; it reads KKKKTK. The helical transmembrane segment at 274–294 threads the bilayer; the sequence is YTICISALSASVALINLGDII. The Extracellular portion of the chain corresponds to 295 to 324; sequence KIGVGYEKVLCPEPGRFATQVDDPLCGLTA. A helical transmembrane segment spans residues 325–345; it reads ALFHVGICSTVLWTTTMAIYL. At 346-358 the chain is on the cytoplasmic side; sequence YSAIKNIKLFKFR. Residues 359-379 traverse the membrane as a helical segment; it reads YFIIFNTGFSLTSLIIAASAS. At 380–401 the chain is on the extracellular side; the sequence is KFEAGTGSIECWIRDRWYSICL. Residues 402 to 422 traverse the membrane as a helical segment; that stretch reads FWLPCGICLLIGTICIASVIV. The Cytoplasmic portion of the chain corresponds to 423–445; sequence EIYKVSKNIKLSESETIMRQIKP. Residues 446–466 form a helical membrane-spanning segment; it reads IISVILVSGSFTYLFIIFFDI. The Extracellular portion of the chain corresponds to 467–502; the sequence is ERNFGGYRSAVTDYVLCLLNSTDNGIECHTSGPSYN. N486 carries N-linked (GlcNAc...) asparagine glycosylation. A helical membrane pass occupies residues 503–523; sequence PYFMFYFFMRFFGILFFLIYG. Residues 524-574 lie on the Cytoplasmic side of the membrane; that stretch reads TSKNARDSWYELFIKIKVSLSETSSTISNNSGGGSSQQKQQQQNEIKLEKI. Residues 550–568 are compositionally biased toward low complexity; that stretch reads ISNNSGGGSSQQKQQQQNE. Positions 550–574 are disordered; it reads ISNNSGGGSSQQKQQQQNEIKLEKI.

This sequence belongs to the G-protein coupled receptor Fz/Smo family.

Its subcellular location is the membrane. This Dictyostelium discoideum (Social amoeba) protein is Frizzled and smoothened-like protein G (fslG).